The sequence spans 249 residues: Aspartate/glutamate leucyltransferase (249 aa).

It belongs to the R-transferase family. Bpt subfamily.

Its subcellular location is the cytoplasm. It catalyses the reaction N-terminal L-glutamyl-[protein] + L-leucyl-tRNA(Leu) = N-terminal L-leucyl-L-glutamyl-[protein] + tRNA(Leu) + H(+). The enzyme catalyses N-terminal L-aspartyl-[protein] + L-leucyl-tRNA(Leu) = N-terminal L-leucyl-L-aspartyl-[protein] + tRNA(Leu) + H(+). Its function is as follows. Functions in the N-end rule pathway of protein degradation where it conjugates Leu from its aminoacyl-tRNA to the N-termini of proteins containing an N-terminal aspartate or glutamate. The chain is Aspartate/glutamate leucyltransferase from Brucella anthropi (strain ATCC 49188 / DSM 6882 / CCUG 24695 / JCM 21032 / LMG 3331 / NBRC 15819 / NCTC 12168 / Alc 37) (Ochrobactrum anthropi).